Consider the following 476-residue polypeptide: S-adenosylmethionine-dependent nucleotide dehydratase (476 aa).

The tract at residues 1–168 (MKTKITLSGF…LTANEVADLI (168 aa)) is cytidylate kinase-like domain. 9-17 (GFAGTGKST) provides a ligand contact to ATP. The region spanning 176–400 (NAVSKIPSVN…HKDVETIVPE (225 aa)) is the Radical SAM core domain. Residues 183–476 (SVNFHLWQPC…DLRKEEVSYE (294 aa)) are prokaryotic viperin domain. Residues Cys192, Cys196, and Cys199 each coordinate [4Fe-4S] cluster.

In the N-terminal section; belongs to the cytidylate kinase-like family. This sequence in the C-terminal section; belongs to the radical SAM superfamily. Viperin family. Requires [4Fe-4S] cluster as cofactor.

It catalyses the reaction GTP + AH2 + S-adenosyl-L-methionine = 3'-deoxy-3',4'-didehydro-GTP + 5'-deoxyadenosine + L-methionine + A + H2O + H(+). Expression of pVip60 in E.coli (strain MG1655) confers resistance to phage T7; prevents culture collapse upon infection. Catalyzes the conversion of guanosine triphosphate (GTP) to 3'-deoxy-3',4'-didehydro-GTP (ddhGTP), probably via a SAM-dependent radical mechanism. The modified nucleotide represses transcription from T7 RNA polymerase-directed genes (possibly by acting as chain terminators), strongly suggesting these nucleotides block viral polymerase transcription. Functionally, the N-terminus of the protein may generate NTP for use by the viperin domain. The chain is S-adenosylmethionine-dependent nucleotide dehydratase from Lacinutrix mariniflava (strain JCM 13824 / KCCM 42306 / AKS432).